The primary structure comprises 462 residues: Jasmonoyl--L-amino acid synthetase GH3.3 (462 aa).

Ser-103 contributes to the ATP binding site. Ser-106 provides a ligand contact to jasmonate. ATP is bound by residues Thr-126, Asn-172, and 337–342 (GASEGW). 170–174 (TTNVY) lines the an L-alpha-amino acid pocket. Jasmonate is bound by residues 334 to 337 (AEYG) and Ser-339.

Belongs to the IAA-amido conjugating enzyme family. Expressed in green shoots and flowers.

The enzyme catalyses a jasmonate + an L-alpha-amino acid + ATP = a jasmonyl-L-amino acid + AMP + diphosphate + H(+). Functionally, catalyzes the synthesis of jasmonate-amino acid conjugates by adenylation. Catalyzes the conjugation of jasmonate (JA) to Ile when expressed in a heterologous system (E.coli). Catalyzes in vitro the conjugation of jasmonate (JA) to Ile, Phe, Leu, Met, Val and Trp. May catalyze the synthesis of indole-3-acetic acid (IAA)-amino acid conjugates, providing a mechanism for the plant to cope with the presence of excess auxin. The protein is Jasmonoyl--L-amino acid synthetase GH3.3 of Oryza sativa subsp. japonica (Rice).